The primary structure comprises 149 residues: Transcriptional repressor NrdR (149 aa).

The segment at 3–34 (CPFCAMEETKVIDSRLVSDGYQVRRRRECGYC) is a zinc-finger region. The region spanning 49 to 139 (PKIIKNDGSR…VYLSFDDINQ (91 aa)) is the ATP-cone domain.

Belongs to the NrdR family. Zn(2+) serves as cofactor.

Its function is as follows. Negatively regulates transcription of bacterial ribonucleotide reductase nrd genes and operons by binding to NrdR-boxes. The protein is Transcriptional repressor NrdR of Histophilus somni (strain 129Pt) (Haemophilus somnus).